Here is a 210-residue protein sequence, read N- to C-terminus: Na(+)-translocating NADH-quinone reductase subunit D (210 aa).

6 helical membrane passes run 14-34 (PIVN…ALAV), 42-62 (LVMA…ISMI), 72-92 (IIVQ…LLQA), 103-123 (VFVG…AYAM), 131-151 (FMDG…VGFV), and 178-198 (NGLL…IWII).

Belongs to the NqrDE/RnfAE family. As to quaternary structure, composed of six subunits; NqrA, NqrB, NqrC, NqrD, NqrE and NqrF.

It localises to the cell inner membrane. It carries out the reaction a ubiquinone + n Na(+)(in) + NADH + H(+) = a ubiquinol + n Na(+)(out) + NAD(+). NQR complex catalyzes the reduction of ubiquinone-1 to ubiquinol by two successive reactions, coupled with the transport of Na(+) ions from the cytoplasm to the periplasm. NqrA to NqrE are probably involved in the second step, the conversion of ubisemiquinone to ubiquinol. The sequence is that of Na(+)-translocating NADH-quinone reductase subunit D from Shewanella oneidensis (strain ATCC 700550 / JCM 31522 / CIP 106686 / LMG 19005 / NCIMB 14063 / MR-1).